We begin with the raw amino-acid sequence, 819 residues long: Outer membrane usher protein CssD (819 aa).

Belongs to the fimbrial export usher family.

Its subcellular location is the cell outer membrane. Its function is as follows. Involved in the export and assembly of C6 fimbrial subunits across the outer membrane. The polypeptide is Outer membrane usher protein CssD (cssD) (Escherichia coli).